The primary structure comprises 1097 residues: Translation initiation factor IF-2 (1097 aa).

The interval 79–458 (LEKRVSPQAD…RVIKKKPKKA (380 aa)) is disordered. The span at 97–112 (AKKEASQEKADAHAKL) shows a compositional bias: basic and acidic residues. Residues 157-173 (AATLAVEEAPIAAAPTE) are compositionally biased toward low complexity. Basic and acidic residues-rich tracts occupy residues 174–190 (EPMH…KIDS) and 202–221 (VEVH…HAEE). A compositionally biased stretch (low complexity) spans 224–236 (TPTTEASSEETSA). A compositionally biased stretch (polar residues) spans 258–267 (RKTQNTTNVS). Basic and acidic residues predominate over residues 268–286 (EENKQHEKQPETLKSDKAM). The span at 340–363 (SDSLQAEISRQQNEISNRFSQSEN) shows a compositional bias: polar residues. The span at 376-385 (HKKKRKRKKN) shows a compositional bias: basic residues. Positions 402 to 443 (PKQEEKPVKKEKPKEREKPAAGKKEQTPGKKPVREDQKERVL) are enriched in basic and acidic residues. The 171-residue stretch at 591-761 (TRPPVVTIMG…LVEAELLELK (171 aa)) folds into the tr-type G domain. The tract at residues 600-607 (GHVDHGKT) is G1. 600 to 607 (GHVDHGKT) contributes to the GTP binding site. Residues 625 to 629 (GITQH) are G2. The G3 stretch occupies residues 647 to 650 (DTPG). Residues 647–651 (DTPGH) and 701–704 (NKID) contribute to the GTP site. Residues 701-704 (NKID) form a G4 region. The tract at residues 737-739 (SAK) is G5.

The protein belongs to the TRAFAC class translation factor GTPase superfamily. Classic translation factor GTPase family. IF-2 subfamily.

It is found in the cytoplasm. In terms of biological role, one of the essential components for the initiation of protein synthesis. Protects formylmethionyl-tRNA from spontaneous hydrolysis and promotes its binding to the 30S ribosomal subunits. Also involved in the hydrolysis of GTP during the formation of the 70S ribosomal complex. The polypeptide is Translation initiation factor IF-2 (Chloroherpeton thalassium (strain ATCC 35110 / GB-78)).